The sequence spans 147 residues: Mucoricin (147 aa).

The Ricin B-type lectin domain maps to 4 to 143 (EEGRLFFIKS…VSANQRWELV (140 aa)).

Belongs to the ribosome-inactivating protein family. Type 1 RIP subfamily.

It localises to the secreted. It catalyses the reaction Endohydrolysis of the N-glycosidic bond at one specific adenosine on the 28S rRNA.. In terms of biological role, N-glycosylase that inhibits protein synthesis in the host by depurinating ribosomal rRNA, and thus acts as a ribosomal inactivating protein (RIP). Promotes vascular permeability in the host and induces necrosis and apoptosis of host alveolar epithelial cells. The chain is Mucoricin from Rhizopus delemar (strain RA 99-880 / ATCC MYA-4621 / FGSC 9543 / NRRL 43880) (Mucormycosis agent).